The chain runs to 78 residues: DNA-directed RNA polymerase subunit Rpo5 (78 aa).

Belongs to the archaeal Rpo5/eukaryotic RPB5 RNA polymerase subunit family. In terms of assembly, part of the RNA polymerase complex.

The protein localises to the cytoplasm. It carries out the reaction RNA(n) + a ribonucleoside 5'-triphosphate = RNA(n+1) + diphosphate. Functionally, DNA-dependent RNA polymerase (RNAP) catalyzes the transcription of DNA into RNA using the four ribonucleoside triphosphates as substrates. This Methanococcus vannielii (strain ATCC 35089 / DSM 1224 / JCM 13029 / OCM 148 / SB) protein is DNA-directed RNA polymerase subunit Rpo5.